Here is a 253-residue protein sequence, read N- to C-terminus: Phosphoribosylaminoimidazole-succinocarboxamide synthase (253 aa).

It belongs to the SAICAR synthetase family.

The catalysed reaction is 5-amino-1-(5-phospho-D-ribosyl)imidazole-4-carboxylate + L-aspartate + ATP = (2S)-2-[5-amino-1-(5-phospho-beta-D-ribosyl)imidazole-4-carboxamido]succinate + ADP + phosphate + 2 H(+). Its pathway is purine metabolism; IMP biosynthesis via de novo pathway; 5-amino-1-(5-phospho-D-ribosyl)imidazole-4-carboxamide from 5-amino-1-(5-phospho-D-ribosyl)imidazole-4-carboxylate: step 1/2. The protein is Phosphoribosylaminoimidazole-succinocarboxamide synthase of Roseobacter denitrificans (strain ATCC 33942 / OCh 114) (Erythrobacter sp. (strain OCh 114)).